Here is a 92-residue protein sequence, read N- to C-terminus: Small ribosomal subunit protein uS19 (92 aa).

The protein belongs to the universal ribosomal protein uS19 family.

Functionally, protein S19 forms a complex with S13 that binds strongly to the 16S ribosomal RNA. This Bifidobacterium longum subsp. infantis (strain ATCC 15697 / DSM 20088 / JCM 1222 / NCTC 11817 / S12) protein is Small ribosomal subunit protein uS19.